Consider the following 163-residue polypeptide: Endoribonuclease YbeY (163 aa).

Histidine 121, histidine 125, and histidine 131 together coordinate Zn(2+).

The protein belongs to the endoribonuclease YbeY family. It depends on Zn(2+) as a cofactor.

It is found in the cytoplasm. Functionally, single strand-specific metallo-endoribonuclease involved in late-stage 70S ribosome quality control and in maturation of the 3' terminus of the 16S rRNA. The sequence is that of Endoribonuclease YbeY from Synechococcus sp. (strain JA-3-3Ab) (Cyanobacteria bacterium Yellowstone A-Prime).